A 218-amino-acid chain; its full sequence is Cytochrome b6 (218 aa).

The helical transmembrane segment at 35 to 55 threads the bilayer; sequence IFYCLGGITLVCFLIQFATGF. Residue C38 coordinates heme c. H89 and H103 together coordinate heme b. The next 3 membrane-spanning stretches (helical) occupy residues 93 to 113, 119 to 139, and 189 to 209; these read ASMM…TGGF, LTWV…VTGY, and LHTF…FLMI. Heme b is bound by residues H190 and H205.

It belongs to the cytochrome b family. PetB subfamily. In terms of assembly, the 4 large subunits of the cytochrome b6-f complex are cytochrome b6, subunit IV (17 kDa polypeptide, PetD), cytochrome f and the Rieske protein, while the 4 small subunits are PetG, PetL, PetM and PetN. The complex functions as a dimer. Heme b serves as cofactor. Requires heme c as cofactor.

The protein resides in the cellular thylakoid membrane. In terms of biological role, component of the cytochrome b6-f complex, which mediates electron transfer between photosystem II (PSII) and photosystem I (PSI), cyclic electron flow around PSI, and state transitions. The chain is Cytochrome b6 from Prochlorococcus marinus (strain MIT 9215).